The primary structure comprises 128 residues: Large ribosomal subunit protein bL19 (128 aa).

Belongs to the bacterial ribosomal protein bL19 family.

Functionally, this protein is located at the 30S-50S ribosomal subunit interface and may play a role in the structure and function of the aminoacyl-tRNA binding site. The chain is Large ribosomal subunit protein bL19 from Mesoplasma florum (strain ATCC 33453 / NBRC 100688 / NCTC 11704 / L1) (Acholeplasma florum).